A 178-amino-acid chain; its full sequence is ATP synthase subunit delta (178 aa).

It belongs to the ATPase delta chain family. As to quaternary structure, F-type ATPases have 2 components, F(1) - the catalytic core - and F(0) - the membrane proton channel. F(1) has five subunits: alpha(3), beta(3), gamma(1), delta(1), epsilon(1). F(0) has three main subunits: a(1), b(2) and c(10-14). The alpha and beta chains form an alternating ring which encloses part of the gamma chain. F(1) is attached to F(0) by a central stalk formed by the gamma and epsilon chains, while a peripheral stalk is formed by the delta and b chains.

It localises to the cell membrane. F(1)F(0) ATP synthase produces ATP from ADP in the presence of a proton or sodium gradient. F-type ATPases consist of two structural domains, F(1) containing the extramembraneous catalytic core and F(0) containing the membrane proton channel, linked together by a central stalk and a peripheral stalk. During catalysis, ATP synthesis in the catalytic domain of F(1) is coupled via a rotary mechanism of the central stalk subunits to proton translocation. In terms of biological role, this protein is part of the stalk that links CF(0) to CF(1). It either transmits conformational changes from CF(0) to CF(1) or is implicated in proton conduction. This Geobacillus stearothermophilus (Bacillus stearothermophilus) protein is ATP synthase subunit delta.